The following is a 182-amino-acid chain: uncharacterized protein (182 aa).

The span at 1–23 (MILSDQNFLQTQWKEPQTAQSKN) shows a compositional bias: polar residues. The disordered stretch occupies residues 1-33 (MILSDQNFLQTQWKEPQTAQSKNTESKCEFHGN).

Belongs to the peptidase M24 family.

This is an uncharacterized protein from Caenorhabditis elegans.